Here is a 181-residue protein sequence, read N- to C-terminus: RNA pyrophosphohydrolase (181 aa).

Residues 6-149 (GFRPNVGIIL…KRRVYTRALQ (144 aa)) enclose the Nudix hydrolase domain. The short motif at 38 to 59 (GGIKAQETPEEALFRELEEEVG) is the Nudix box element. The interval 159-181 (GLPRQPPVGRPRRSAPPRGCRRA) is disordered. Residues 168-181 (RPRRSAPPRGCRRA) show a composition bias toward basic residues.

This sequence belongs to the Nudix hydrolase family. RppH subfamily. A divalent metal cation serves as cofactor.

Functionally, accelerates the degradation of transcripts by removing pyrophosphate from the 5'-end of triphosphorylated RNA, leading to a more labile monophosphorylated state that can stimulate subsequent ribonuclease cleavage. This Alkalilimnicola ehrlichii (strain ATCC BAA-1101 / DSM 17681 / MLHE-1) protein is RNA pyrophosphohydrolase.